The sequence spans 141 residues: Large ribosomal subunit protein uL16 (141 aa).

This sequence belongs to the universal ribosomal protein uL16 family. Part of the 50S ribosomal subunit. Contacts the CTC protein (RL25).

Functionally, binds the 5S and 23S rRNAs and is also seen to make contacts with the A and P site tRNAs. Interacts with A site tRNA mimics, and is probably one of the key factors, along with a helix of the 23S rRNA, in positioning tRNA stems in the peptidyl-transferase center. This Deinococcus radiodurans (strain ATCC 13939 / DSM 20539 / JCM 16871 / CCUG 27074 / LMG 4051 / NBRC 15346 / NCIMB 9279 / VKM B-1422 / R1) protein is Large ribosomal subunit protein uL16 (rplP).